We begin with the raw amino-acid sequence, 1215 residues long: MTKKSFVSSPIVRDSTLLVPKSLIAKPYVLPFFPLYATFAQLYFQQYDRYIKGPEWTFVYLGTLVSLNILVMLMPAWNVKIKAKFNYSTTKNVNEATHILIYTTPNNGSDGIVEIQRVTEAGSLQTFFQFQKKRFLWHENEQVFSSPKFLVDESPKIGDFQKCKGHSGDLTHLKRLYGENSFDIPIPTFMELFKEHAVAPLFVFQVFCVALWLLDEFWYYSLFNLFMIISMEAAAVFQRLTALKEFRTMGIKPYTINVFRNKKWVALQTNELLPMDLVSITRTAEESAIPCDLILLDGSAIVNEAMLSGESTPLLKESIKLRPSEDNLQLDGVDKIAVLHGGTKALQVTPPEHKSDIPPPPDGGALAIVTKTGFETSQGSLVRVMIYSAERVSVDNKEALMFILFLLIFAVIASWYVWVEGTKMGRIQSKLILDCILIITSVVPPELPMELTMAVNSSLAALAKFYVYCTEPFRIPFAGRIDVCCFDKTGTLTGEDLVFEGLAGISADSENIRHLYSAAEAPESTILVIGAAHALVKLEDGDIVGDPMEKATLKAVGWAVERKNSNYREGTGKLDIIRRFQFSSALKRSASIASHNDALFAAVKGAPETIRERLSDIPKNYDEIYKSFTRSGSRVLALASKSLPKMSQSKIDDLNRDDVESELTFNGFLIFHCPLKDDAIETIKMLNESSHRSIMITGDNPLTAVHVAKEVGIVFGETLILDRAGKSDDNQLLFRDVEETVSIPFDPSKDTFDHSKLFDRYDIAVTGYALNALEGHSQLRDLLRHTWVYARVSPSQKEFLLNTLKDMGYQTLMCGDGTNDVGALKQAHVGIALLNGTEEGLKKLGEQRRLEGMKMMYIKQTEFMARWNQPQPPVPEPIAHLFPPGPKNPHYLKALESKGTVITPEIRKAVEEANSKPVEVIKPNGLSEKKPADLASLLLNSAGDAQGDEAPALKLGDASCAAPFTSKLANVSAVTNIIRQGRCALVNTIQMYKILALNCLISAYSLSIIYMAGVKFGDGQATVSGLLLSVCFLSISRGKPLEKLSKQRPQSGIFNVYIMGSILSQFAVHIATLVYITTEIYKLEPREPQVDLEKEFAPSLLNTGIFIIQLVQQVSTFAVNYQGEPFRENIRSNKGMYYGLLGVTGLALASATEFLPELNEAMKFVPMTDDFKIKLTLTLLLDFFGSWGVEHFFKFFFMDDKPSDISVQQVKIASK.

At 1–27 (MTKKSFVSSPIVRDSTLLVPKSLIAKP) the chain is on the cytoplasmic side. Residues 28–43 (YVLPFFPLYATFAQLY) form a helical membrane-spanning segment. The Lumenal segment spans residues 44–56 (FQQYDRYIKGPEW). A helical transmembrane segment spans residues 57–76 (TFVYLGTLVSLNILVMLMPA). Topologically, residues 77 to 188 (WNVKIKAKFN…ENSFDIPIPT (112 aa)) are cytoplasmic. The A-domain; part 1 stretch occupies residues 156 to 185 (KIGDFQKCKGHSGDLTHLKRLYGENSFDIP). A helical membrane pass occupies residues 189–216 (FMELFKEHAVAPLFVFQVFCVALWLLDE). Residue Phe217 is a topological domain, lumenal. Residues 218-246 (WYYSLFNLFMIISMEAAAVFQRLTALKEF) form a helical membrane-spanning segment. Residues 247–395 (RTMGIKPYTI…IYSAERVSVD (149 aa)) lie on the Cytoplasmic side of the membrane. Residues 250–390 (GIKPYTINVF…LVRVMIYSAE (141 aa)) are A-domain; part 2. Ser324 is modified (phosphoserine). The helical transmembrane segment at 396–425 (NKEALMFILFLLIFAVIASWYVWVEGTKMG) threads the bilayer. The Lumenal portion of the chain corresponds to 426 to 427 (RI). A run of 2 helical transmembrane segments spans residues 428-442 (QSKLILDCILIITSV) and 446-464 (ELPMELTMAVNSSLAALAK). Residues 465–971 (FYVYCTEPFR…APFTSKLANV (507 aa)) are Cytoplasmic-facing. Residues 466 to 495 (YVYCTEPFRIPFAGRIDVCCFDKTGTLTGE) form a P-domain; part 1 region. The 4-aspartylphosphate intermediate role is filled by Asp487. Mg(2+)-binding residues include Asp487 and Thr489. Residues 487-489 (DKT), Phe582, Arg634, Asp699, and 816-820 (DGTND) each bind ATP. Residues 497–674 (LVFEGLAGIS…FNGFLIFHCP (178 aa)) form an N-domain region. The tract at residues 677–837 (DDAIETIKML…HVGIALLNGT (161 aa)) is P-domain; part 2. Asp816 provides a ligand contact to Mg(2+). An arm-like region spans residues 838 to 953 (EEGLKKLGEQ…DAQGDEAPAL (116 aa)). The residue at position 936 (Ser936) is a Phosphoserine. Residues 954 to 969 (KLGDASCAAPFTSKLA) form a P-domain; part 3 region. Residues 972-1011 (SAVTNIIRQGRCALVNTIQMYKILALNCLISAYSLSIIYM) traverse the membrane as a helical segment. The Lumenal segment spans residues 1012-1017 (AGVKFG). Residues 1018–1035 (DGQATVSGLLLSVCFLSI) form a helical membrane-spanning segment. The Cytoplasmic segment spans residues 1036 to 1055 (SRGKPLEKLSKQRPQSGIFN). A helical transmembrane segment spans residues 1056 to 1084 (VYIMGSILSQFAVHIATLVYITTEIYKLE). The Lumenal portion of the chain corresponds to 1085-1099 (PREPQVDLEKEFAPS). The chain crosses the membrane as a helical span at residues 1100-1121 (LLNTGIFIIQLVQQVSTFAVNY). Residues 1122–1133 (QGEPFRENIRSN) are Cytoplasmic-facing. Residues 1134–1151 (KGMYYGLLGVTGLALASA) form a helical membrane-spanning segment. Residues 1152-1168 (TEFLPELNEAMKFVPMT) are Lumenal-facing. The helical transmembrane segment at 1169–1197 (DDFKIKLTLTLLLDFFGSWGVEHFFKFFF) threads the bilayer. Topologically, residues 1198 to 1215 (MDDKPSDISVQQVKIASK) are cytoplasmic.

Belongs to the cation transport ATPase (P-type) (TC 3.A.3) family. Type V subfamily. Requires Mg(2+) as cofactor.

The protein resides in the endoplasmic reticulum membrane. It carries out the reaction [protein]-with a C-terminal TM segment(out) + ATP + H2O = [protein]-with a C-terminal TM segment(in) + ADP + phosphate + H(+). With respect to regulation, the ATPase activity is stimulated by phosphatidylinositol 4-phosphate (PI4P). Endoplasmic reticulum translocase required to remove mitochondrial transmembrane proteins mistargeted to the endoplasmic reticulum. Acts as a dislocase that mediates the ATP-dependent extraction of mislocalized mitochondrial transmembrane proteins from the endoplasmic reticulum membrane. Specifically binds mitochondrial tail-anchored transmembrane proteins: has an atypically large substrate-binding pocket that recognizes and binds moderately hydrophobic transmembranes with short hydrophilic lumenal domains. In Saccharomyces cerevisiae (strain ATCC 204508 / S288c) (Baker's yeast), this protein is Endoplasmic reticulum transmembrane helix translocase.